The chain runs to 417 residues: Serine hydroxymethyltransferase (417 aa).

Residues Leu-112 and 116–118 (GHL) contribute to the (6S)-5,6,7,8-tetrahydrofolate site. At Lys-221 the chain carries N6-(pyridoxal phosphate)lysine. Residue Glu-247 coordinates (6S)-5,6,7,8-tetrahydrofolate.

This sequence belongs to the SHMT family. Homodimer. Pyridoxal 5'-phosphate serves as cofactor.

Its subcellular location is the cytoplasm. It carries out the reaction (6R)-5,10-methylene-5,6,7,8-tetrahydrofolate + glycine + H2O = (6S)-5,6,7,8-tetrahydrofolate + L-serine. It functions in the pathway one-carbon metabolism; tetrahydrofolate interconversion. Its pathway is amino-acid biosynthesis; glycine biosynthesis; glycine from L-serine: step 1/1. Functionally, catalyzes the reversible interconversion of serine and glycine with tetrahydrofolate (THF) serving as the one-carbon carrier. This reaction serves as the major source of one-carbon groups required for the biosynthesis of purines, thymidylate, methionine, and other important biomolecules. Also exhibits THF-independent aldolase activity toward beta-hydroxyamino acids, producing glycine and aldehydes, via a retro-aldol mechanism. In Borrelia duttonii (strain Ly), this protein is Serine hydroxymethyltransferase.